We begin with the raw amino-acid sequence, 406 residues long: L-methionine gamma-lyase (406 aa).

Pyridoxal 5'-phosphate-binding positions include 76–78 (YQR) and 106–107 (GM). Tyr-132 provides a ligand contact to L-homocysteine. 219–221 (SAT) provides a ligand contact to pyridoxal 5'-phosphate. The residue at position 222 (Lys-222) is an N6-(pyridoxal phosphate)lysine. Position 380 (Arg-380) interacts with L-homocysteine. Position 380 (Arg-380) interacts with L-methionine.

This sequence belongs to the trans-sulfuration enzymes family. L-methionine gamma-lyase subfamily. As to quaternary structure, homotetramer. The cofactor is pyridoxal 5'-phosphate.

The catalysed reaction is L-methionine + H2O = methanethiol + 2-oxobutanoate + NH4(+). It carries out the reaction L-homocysteine + H2O = 2-oxobutanoate + hydrogen sulfide + NH4(+) + H(+). Its activity is regulated as follows. Is inhibited in vitro by carbonyl reagents, completely inactivated by DL-propargylglycine, and unaffected by metal-chelating agents. Its function is as follows. Catalyzes the alpha,gamma-elimination of L-methionine to produce methanethiol, 2-oxobutanoate and ammonia. May be responsible for the production of methanethiol associated with desirable Cheddar-type sulfur notes during cheese ripening. Is also able to catalyze the alpha,gamma-elimination of L-homocysteine and DL-selenomethionine, but has no activity toward L-cysteine, L-cystathionine, S-adenosyl-L-homocysteine and D-methionine. This is L-methionine gamma-lyase from Brevibacterium aurantiacum.